The sequence spans 201 residues: Small ribosomal subunit protein uS4c (201 aa).

Residues 15–43 (LGALPGLTSKRPSPGSDLRNQSRSGKRSQ) form a disordered region. In terms of domain architecture, S4 RNA-binding spans 89–150 (MRLDNILFRL…EQRSRALIQK (62 aa)).

It belongs to the universal ribosomal protein uS4 family. As to quaternary structure, part of the 30S ribosomal subunit. Contacts protein S5. The interaction surface between S4 and S5 is involved in control of translational fidelity.

It is found in the plastid. The protein resides in the chloroplast. Functionally, one of the primary rRNA binding proteins, it binds directly to 16S rRNA where it nucleates assembly of the body of the 30S subunit. With S5 and S12 plays an important role in translational accuracy. The polypeptide is Small ribosomal subunit protein uS4c (rps4) (Ceratophyllum demersum (Rigid hornwort)).